The sequence spans 224 residues: Peptidyl-prolyl cis-trans isomerase FKBP3 (224 aa).

Ala-2 is modified (N-acetylalanine). Ser-36 is subject to Phosphoserine. Residues 87-119 (NVKLNEDKPKETKSEETPDEGPPKYTKSVLKKG) form a disordered region. Over residues 89–102 (KLNEDKPKETKSEE) the composition is skewed to basic and acidic residues. Lys-99 bears the N6-acetyllysine mark. Positions 128–224 (GDVVHCWYTG…IFEVELVDID (97 aa)) constitute a PPIase FKBP-type domain. Ser-152 bears the Phosphoserine mark. Residue Lys-170 is modified to N6-acetyllysine.

It belongs to the FKBP-type PPIase family.

Its subcellular location is the nucleus. It catalyses the reaction [protein]-peptidylproline (omega=180) = [protein]-peptidylproline (omega=0). With respect to regulation, inhibited preferentially by rapamycin over FK506. In terms of biological role, FK506- and rapamycin-binding proteins (FKBPs) constitute a family of receptors for the two immunosuppressants which inhibit T-cell proliferation by arresting two distinct cytoplasmic signal transmission pathways. PPIases accelerate the folding of proteins. This Oryctolagus cuniculus (Rabbit) protein is Peptidyl-prolyl cis-trans isomerase FKBP3 (FKBP3).